Reading from the N-terminus, the 370-residue chain is Capsular polysaccharide phosphotransferase (370 aa).

Belongs to the stealth family.

Its function is as follows. Part of a capsular polysaccharide synthesis locus. The polypeptide is Capsular polysaccharide phosphotransferase (Actinobacillus suis).